Reading from the N-terminus, the 118-residue chain is Large ribosomal subunit protein bL19 (118 aa).

The protein belongs to the bacterial ribosomal protein bL19 family.

This protein is located at the 30S-50S ribosomal subunit interface and may play a role in the structure and function of the aminoacyl-tRNA binding site. This is Large ribosomal subunit protein bL19 from Dictyoglomus turgidum (strain DSM 6724 / Z-1310).